Reading from the N-terminus, the 64-residue chain is Arasin 1 (64 aa).

The N-terminal stretch at 1–25 (MERRTLLVVLLVCSCVVAAAAEASP) is a signal peptide. Residues 22–43 (EASPSRWPSPGRPRPFPGRPKP) are disordered. The interval 26 to 48 (SRWPSPGRPRPFPGRPKPIFRPR) is pro/Arg-rich region responsible for antibacterial and antifungal activity. Residues 31-43 (PGRPRPFPGRPKP) show a composition bias toward pro residues. Residues 49–62 (PCNCYAPPCPCDRW) form a cystein-containing C-terminal region important for stability but not essential for antimicrobial activity region. 2 disulfide bridges follow: cysteine 50/cysteine 59 and cysteine 52/cysteine 57. The propeptide occupies 63–64 (RH).

Interacts with chitin through the N-terminal region (26-48). This interaction may be important, since chitin is a component of the fungal cell wall, as well as of the crab exoskeleton (permitting a possible action of arasin in wound healing in case of lesions). Post-translationally, disulfide bonds are important for activity especially against Gram-negative bacteria, since the linearization of the peptide causes a strong decrease of activity on these bacteria. Mainly expressed in hemocytes. No or very low expression in heart, gills, inestines, and epidermis.

Its function is as follows. Antimicrobial peptide that has a large activity spectrum with activity against Gram-positive, Gram-negative bacteria, as well as against fungi. Shows activity at micromolar concentrations. Displays minimal inhibitory concentration (MIC) values lower than minimal bactericidal concentrations (MBC). Synthetic peptides with similar activities than the full length peptide (composed of the first 23 or 25 amino acids (Arasin 1(26-48) or Arasin 1(26-50))) may have a dual mode of action depending on the peptide concentrations. At MIC concentrations, the peptide penetrates into the cytoplasm of target cells (tested on the Gram-negative E.coli). The two inner membrane proteins YgdD and SbmA may be required for this uptake. At concentrations higher than MIC, arasin may act by disrupting membranes. Full-length and N-terminal peptides do not show hemolytic activity. The protein is Arasin 1 of Hyas araneus (Atlantic lyre crab).